Consider the following 753-residue polypeptide: Probable dipeptidyl peptidase 4 (753 aa).

The first 18 residues, 1-18 (MKTSQFLSLLLLAGIAQA), serve as a signal peptide directing secretion. 3 N-linked (GlcNAc...) asparagine glycosylation sites follow: Asn84, Asn114, and Asn222. Active-site charge relay system residues include Ser616, Asp668, and His703.

Belongs to the peptidase S9B family.

Its subcellular location is the secreted. It catalyses the reaction Release of an N-terminal dipeptide, Xaa-Yaa-|-Zaa-, from a polypeptide, preferentially when Yaa is Pro, provided Zaa is neither Pro nor hydroxyproline.. Its function is as follows. Extracellular dipeptidyl-peptidase which removes N-terminal dipeptides sequentially from polypeptides having unsubstituted N-termini provided that the penultimate residue is proline. Contributes to pathogenicity. The chain is Probable dipeptidyl peptidase 4 (DPP4) from Trichophyton verrucosum (strain HKI 0517).